Consider the following 651-residue polypeptide: DNA mismatch repair protein MutL (651 aa).

It belongs to the DNA mismatch repair MutL/HexB family.

Functionally, this protein is involved in the repair of mismatches in DNA. It is required for dam-dependent methyl-directed DNA mismatch repair. May act as a 'molecular matchmaker', a protein that promotes the formation of a stable complex between two or more DNA-binding proteins in an ATP-dependent manner without itself being part of a final effector complex. This is DNA mismatch repair protein MutL from Streptococcus mutans serotype c (strain ATCC 700610 / UA159).